The chain runs to 345 residues: Uroporphyrinogen decarboxylase (345 aa).

Substrate contacts are provided by residues 27–31, F46, D76, Y152, S207, and H321; that span reads RQAGR.

The protein belongs to the uroporphyrinogen decarboxylase family. As to quaternary structure, homodimer.

Its subcellular location is the cytoplasm. It carries out the reaction uroporphyrinogen III + 4 H(+) = coproporphyrinogen III + 4 CO2. It functions in the pathway porphyrin-containing compound metabolism; protoporphyrin-IX biosynthesis; coproporphyrinogen-III from 5-aminolevulinate: step 4/4. In terms of biological role, catalyzes the decarboxylation of four acetate groups of uroporphyrinogen-III to yield coproporphyrinogen-III. The protein is Uroporphyrinogen decarboxylase of Staphylococcus aureus (strain MRSA252).